Here is a 147-residue protein sequence, read N- to C-terminus: Transcriptional regulator MraZ (147 aa).

2 consecutive SpoVT-AbrB domains span residues 5–50 (AIAL…PLSA) and 79–122 (AQEE…SDAG).

This sequence belongs to the MraZ family. As to quaternary structure, forms oligomers.

Its subcellular location is the cytoplasm. It localises to the nucleoid. This is Transcriptional regulator MraZ from Aromatoleum aromaticum (strain DSM 19018 / LMG 30748 / EbN1) (Azoarcus sp. (strain EbN1)).